The sequence spans 286 residues: ATP synthase gamma chain (286 aa).

It belongs to the ATPase gamma chain family. F-type ATPases have 2 components, CF(1) - the catalytic core - and CF(0) - the membrane proton channel. CF(1) has five subunits: alpha(3), beta(3), gamma(1), delta(1), epsilon(1). CF(0) has three main subunits: a, b and c.

The protein localises to the cell membrane. In terms of biological role, produces ATP from ADP in the presence of a proton gradient across the membrane. The gamma chain is believed to be important in regulating ATPase activity and the flow of protons through the CF(0) complex. This is ATP synthase gamma chain from Ruminococcus albus (strain ATCC 27210 / DSM 20455 / JCM 14654 / NCDO 2250 / 7).